Consider the following 470-residue polypeptide: MKLALHRIAGATMAALTTEVQYLGSNDASYEDPQADAALMKSRFNFEKPYSASSSLHRLIPGNKELIYGGLSTILPTNASDFPLSNGSGEATQCGEDIVDNMECFMILTPAQQLVIVILAITLGTFTVLENFVVLCVILHSHTLRSRPSYHFIGSLAVADLIGSIIFVYSFLDFHVLHRKDSPSIFLFKLAGVIASFTASVGSLFLTAIDRYVSIHRPMAYKRIITKTKAVIAFSVMWAISIEFSLLPLLGWNCKRLHSVCSDIFPLIDEKYLMFWIGMTTVLLLFIIYAYMFILWKSHHHAVRMLSRSSQRSIIVYTSEGTKVQTVRPEQARMDLRLAKTLVLILVALIICWGPLLAIMVYDLFGRVNDFIKTVFAFCSMLCLLNSTINPVIYAMRSKDLRRAFVNICHMCRGTTQSLDSSAESDWNSRSVRSTGGRAGKDRSVGGKPQVKVAQVTVSGVTASSPAEAV.

At Met-1–Gln-113 the chain is on the extracellular side. 2 N-linked (GlcNAc...) asparagine glycosylation sites follow: Asn-78 and Asn-86. Residues Leu-114–Leu-139 traverse the membrane as a helical segment. The Cytoplasmic segment spans residues His-140–His-151. Residues Phe-152–Leu-172 traverse the membrane as a helical segment. The Extracellular segment spans residues Asp-173–Ser-184. Residues Ile-185–Ile-209 form a helical membrane-spanning segment. Residues Asp-210–Lys-229 lie on the Cytoplasmic side of the membrane. A helical transmembrane segment spans residues Ala-230–Trp-252. Residues Asn-253–Glu-270 lie on the Extracellular side of the membrane. The chain crosses the membrane as a helical span at residues Lys-271–Trp-296. Over Lys-297–Thr-341 the chain is Cytoplasmic. The helical transmembrane segment at Leu-342 to Tyr-362 threads the bilayer. The Extracellular portion of the chain corresponds to Asp-363–Thr-374. The helical transmembrane segment at Val-375–Met-396 threads the bilayer. At Arg-397–Val-470 the chain is on the cytoplasmic side. Cys-412 carries the S-palmitoyl cysteine lipid modification. The span at Ser-418 to Ser-434 shows a compositional bias: polar residues. Residues Ser-418 to Gln-450 are disordered.

Belongs to the G-protein coupled receptor 1 family. Palmitoylation at Cys-412 is important for recruitment at both plasma membrane and lipid rafts and association with G protein alpha subunits.

It is found in the cell membrane. Its subcellular location is the mitochondrion outer membrane. It localises to the cell projection. The protein localises to the axon. The protein resides in the presynapse. Its function is as follows. G-protein coupled receptor for cannabinoids. Mediates many cannabinoid-induced effects in the central nervous system (CNS), as well as in peripheral tissues. Regulates cellular respiration and energy production in response to cannabinoids. Signaling typically involves reduction in cyclic AMP. The chain is Cannabinoid receptor type 1B (cnr1b) from Takifugu rubripes (Japanese pufferfish).